The primary structure comprises 1044 residues: Isoleucine--tRNA ligase (1044 aa).

A 'HIGH' region motif is present at residues 48–58 (PFATGLPHFGH). Residues 594–598 (KMSKS) carry the 'KMSKS' region motif. Residue lysine 597 coordinates ATP.

Belongs to the class-I aminoacyl-tRNA synthetase family. IleS type 2 subfamily. Monomer. Requires Zn(2+) as cofactor.

It is found in the cytoplasm. The enzyme catalyses tRNA(Ile) + L-isoleucine + ATP = L-isoleucyl-tRNA(Ile) + AMP + diphosphate. Its function is as follows. Catalyzes the attachment of isoleucine to tRNA(Ile). As IleRS can inadvertently accommodate and process structurally similar amino acids such as valine, to avoid such errors it has two additional distinct tRNA(Ile)-dependent editing activities. One activity is designated as 'pretransfer' editing and involves the hydrolysis of activated Val-AMP. The other activity is designated 'posttransfer' editing and involves deacylation of mischarged Val-tRNA(Ile). The polypeptide is Isoleucine--tRNA ligase (Borrelia turicatae (strain 91E135)).